The sequence spans 360 residues: Dynein intermediate light chain dil1 (360 aa).

It belongs to the dynein light intermediate chain DYN3 family. As to quaternary structure, the dynein complex consists of at least two heavy chains and a number of intermediate and light chains. Interacts with rga3, sec10, sec16, syp1, rvb2, spbc19c7.04c, spbc2f12.05 and spac3a11.10c. The N-terminal part is acetylated.

It localises to the cytoplasm. The protein resides in the cytoskeleton. Its function is as follows. Component of the cytoplasmic dynein which acts as a motor for the intracellular retrograde motility of vesicles and organelles along microtubules. Promotes oscillatory nuclear movement and efficient pairing of homologous centromeres during meiotic prophase. The chain is Dynein intermediate light chain dil1 (dil1) from Schizosaccharomyces pombe (strain 972 / ATCC 24843) (Fission yeast).